Reading from the N-terminus, the 357-residue chain is Putative DENN domain-containing protein 10 B (357 aa).

The region spanning 1-140 (MAAAELADTQ…TKGICQSEEN (140 aa)) is the uDENN domain. A cDENN domain is found at 159-299 (IKDIVSQFGM…PEKSESQVIQ (141 aa)). The 57-residue stretch at 301-357 (IALKTREIFTNLAPFSEVSADGEKRVLNLEALKQKRFPPATENFLYHLAAAEQMLKI) folds into the dDENN domain.

Belongs to the DENND10 family.

The protein localises to the late endosome. May be a guanine nucleotide exchange factor (GEF). This is Putative DENN domain-containing protein 10 B from Homo sapiens (Human).